The following is a 369-amino-acid chain: Serpentine receptor class epsilon-45 (369 aa).

Transmembrane regions (helical) follow at residues 1 to 21 (MIFL…IFIL), 39 to 59 (FVLT…AIHI), 67 to 87 (TVLL…NILI), 127 to 147 (FFLG…TLLV), 169 to 191 (GLFF…LFFF), 195 to 217 (HFAV…FTYV), 258 to 278 (VIHA…FMYL), and 291 to 311 (IFES…LGSV).

Belongs to the nematode receptor-like protein sre family.

The protein localises to the membrane. This Caenorhabditis elegans protein is Serpentine receptor class epsilon-45 (sre-45).